The sequence spans 339 residues: Diguanylate cyclase VdcA (339 aa).

The region spanning 206–339 is the GGDEF domain; sequence QQVSLIMLDI…NLGRNRVMPL (134 aa). Residue Asp-214 coordinates Mg(2+). Residues Asn-222 and Asp-231 each contribute to the substrate site. Glu-257 provides a ligand contact to Mg(2+). Glu-257 serves as the catalytic Proton acceptor.

Mg(2+) serves as cofactor.

The enzyme catalyses 2 GTP = 3',3'-c-di-GMP + 2 diphosphate. It participates in purine metabolism; 3',5'-cyclic di-GMP biosynthesis. Its function is as follows. Diguanylate cyclase (DGC) that catalyzes the synthesis of cyclic diguanylate (c-di-GMP) via the condensation of 2 GTP molecules. Is involved in the modulation of intracellular c-di-GMP levels. Cyclic-di-GMP is a second messenger which positively regulates biofilm formation and negatively regulates virulence in V.cholerae, and is proposed to play an important role in the transition from persistence in the environment to survival in the host. Overexpression of vdcA results in increased biofilm formation, and reduced motility and virulence. This chain is Diguanylate cyclase VdcA (vdcA), found in Vibrio cholerae serotype O1 (strain ATCC 39315 / El Tor Inaba N16961).